The sequence spans 470 residues: Iron-sulfur cluster assembly SufBD family protein ABCI9 (470 aa).

Belongs to the iron-sulfur cluster assembly SufBD family.

In Arabidopsis thaliana (Mouse-ear cress), this protein is Iron-sulfur cluster assembly SufBD family protein ABCI9 (ABCI9).